The following is a 279-amino-acid chain: Tumor protein p63-regulated gene 1 protein (279 aa).

Residues 1-49 (MSTIGSFDGFQPVSLKQEEEDQPSENDHLSTKEGNSGKDPGSRRISRQQ) are disordered. The hSac2 domain occupies 72-259 (VTRPGAIETA…ILIETYTGLM (188 aa)).

It belongs to the TPRG1 family. Highly expressed in skin. Also detected at low levels in tongue and esophagus.

The protein localises to the cytoplasm. The chain is Tumor protein p63-regulated gene 1 protein from Mus musculus (Mouse).